The chain runs to 354 residues: Uroporphyrinogen decarboxylase (354 aa).

Residues 27-31, Asp77, Tyr154, Thr209, and His327 contribute to the substrate site; that span reads RQAGR.

It belongs to the uroporphyrinogen decarboxylase family. Homodimer.

It is found in the cytoplasm. The enzyme catalyses uroporphyrinogen III + 4 H(+) = coproporphyrinogen III + 4 CO2. The protein operates within porphyrin-containing compound metabolism; protoporphyrin-IX biosynthesis; coproporphyrinogen-III from 5-aminolevulinate: step 4/4. In terms of biological role, catalyzes the decarboxylation of four acetate groups of uroporphyrinogen-III to yield coproporphyrinogen-III. In Salmonella paratyphi A (strain ATCC 9150 / SARB42), this protein is Uroporphyrinogen decarboxylase.